The sequence spans 635 residues: Threonine--tRNA ligase (635 aa).

The region spanning 1–61 is the TGS domain; it reads MINISLSDGS…ENNCKLRILT (61 aa). The interval 242-533 is catalytic; the sequence is DHRKLGRELD…LIEEYAGCFP (292 aa). 3 residues coordinate Zn(2+): Cys333, His384, and His510.

This sequence belongs to the class-II aminoacyl-tRNA synthetase family. As to quaternary structure, homodimer. The cofactor is Zn(2+).

Its subcellular location is the cytoplasm. The catalysed reaction is tRNA(Thr) + L-threonine + ATP = L-threonyl-tRNA(Thr) + AMP + diphosphate + H(+). Functionally, catalyzes the attachment of threonine to tRNA(Thr) in a two-step reaction: L-threonine is first activated by ATP to form Thr-AMP and then transferred to the acceptor end of tRNA(Thr). Also edits incorrectly charged L-seryl-tRNA(Thr). The sequence is that of Threonine--tRNA ligase from Rickettsia canadensis (strain McKiel).